The primary structure comprises 426 residues: MMSTSRAVKSPACAARRRQWSADAPNRTATFLACRHGRRLGGGGGAPCSVRAEGSNTIGCLEAEAWGGAPALPGLRVAAPSPGDAFVVPSEQRVHEVVLRQAALAAAAPRTARIEPVPLDGGLKAAFHRCGEVCREYAKTFYLATQLMTPERRMAIWAIYVWCRRTDELVDGPNASHISALALDRWESRLEDIFAGRPYDMLDAALSDTVARFPVDIQPFRDMIEGMRMDLKKSRYRSFDELYLYCYYVAGTVGLMSVPVMGISPASRAATETVYKGALALGLANQLTNILRDVGEDARRGRIYLPQDELEMAGLSDADVLDGRVTDEWRGFMRGQIARARAFFRQAEEGATELNQESRWPVWSSLLLYRQILDEIEANDYDNFTRRAYVPKTKKLMALPKAYLRSLVVPSSSSQAESRRRYSTLT.

A chloroplast-targeting transit peptide spans 1–52 (MMSTSRAVKSPACAARRRQWSADAPNRTATFLACRHGRRLGGGGGAPCSVRA).

It belongs to the phytoene/squalene synthase family. In terms of tissue distribution, expressed in roots and endosperm.

The protein localises to the plastid. The protein resides in the chloroplast. It is found in the plastoglobule. It catalyses the reaction 2 (2E,6E,10E)-geranylgeranyl diphosphate = 15-cis-phytoene + 2 diphosphate. Catalyzes the conversion of geranylgeranyl diphosphate to phytoene. Mediates the first committed step in carotenoid biosynthesis. May play a role in regulating carotenoid flux in response to abiotic stress in roots. May control flux to carotenoid precursors that are required for abiotic stress-induced abscisic acid (ABA) formation in roots. This is Phytoene synthase 3, chloroplastic from Zea mays (Maize).